Here is a 399-residue protein sequence, read N- to C-terminus: DNA replication and repair protein RecF (399 aa).

Glycine 30–threonine 37 provides a ligand contact to ATP.

Belongs to the RecF family.

It is found in the cytoplasm. Functionally, the RecF protein is involved in DNA metabolism; it is required for DNA replication and normal SOS inducibility. RecF binds preferentially to single-stranded, linear DNA. It also seems to bind ATP. The polypeptide is DNA replication and repair protein RecF (Paenarthrobacter aurescens (strain TC1)).